The primary structure comprises 271 residues: Co-chaperone protein DjlA (271 aa).

The Periplasmic portion of the chain corresponds to 1–6; the sequence is MQYWGK. The helical transmembrane segment at 7-31 threads the bilayer; the sequence is IIGVAVALIMGGGFWGVVLGLLIGH. Over 32–271 the chain is Cytoplasmic; sequence MFDKARSRKM…ELIKQQKGFK (240 aa). In terms of domain architecture, J spans 205 to 271; that stretch reads DACNVLGVKP…ELIKQQKGFK (67 aa).

Homodimer.

Its subcellular location is the cell inner membrane. Regulatory DnaK co-chaperone. Direct interaction between DnaK and DjlA is needed for the induction of the wcaABCDE operon, involved in the synthesis of a colanic acid polysaccharide capsule, possibly through activation of the RcsB/RcsC phosphotransfer signaling pathway. The colanic acid capsule may help the bacterium survive conditions outside the host. The protein is Co-chaperone protein DjlA of Escherichia coli O6:H1 (strain CFT073 / ATCC 700928 / UPEC).